Reading from the N-terminus, the 79-residue chain is Sec-independent protein translocase protein TatA (79 aa).

The helical transmembrane segment at 1–21 (MGSLSIWHWIVVIAVVLLLFG) threads the bilayer. Residues 43–60 (LQDDEKTAEKPDPVKSID) are compositionally biased toward basic and acidic residues. The interval 43–79 (LQDDEKTAEKPDPVKSIDHNAPTAAAPTRTDVGSKAV) is disordered.

The protein belongs to the TatA/E family. As to quaternary structure, the Tat system comprises two distinct complexes: a TatABC complex, containing multiple copies of TatA, TatB and TatC subunits, and a separate TatA complex, containing only TatA subunits. Substrates initially bind to the TatABC complex, which probably triggers association of the separate TatA complex to form the active translocon.

The protein localises to the cell inner membrane. Functionally, part of the twin-arginine translocation (Tat) system that transports large folded proteins containing a characteristic twin-arginine motif in their signal peptide across membranes. TatA could form the protein-conducting channel of the Tat system. The polypeptide is Sec-independent protein translocase protein TatA (Rhodopseudomonas palustris (strain BisB5)).